The following is an 867-amino-acid chain: Protein translocase subunit SecA (867 aa).

Residues Q86, G104–T108, and D499 contribute to the ATP site. Residues C848, C850, C859, and H860 each contribute to the Zn(2+) site.

It belongs to the SecA family. Monomer and homodimer. Part of the essential Sec protein translocation apparatus which comprises SecA, SecYEG and auxiliary proteins SecDF-YajC and YidC. The cofactor is Zn(2+).

The protein resides in the cell membrane. The protein localises to the cytoplasm. The catalysed reaction is ATP + H2O + cellular proteinSide 1 = ADP + phosphate + cellular proteinSide 2.. Functionally, part of the Sec protein translocase complex. Interacts with the SecYEG preprotein conducting channel. Has a central role in coupling the hydrolysis of ATP to the transfer of proteins into and across the cell membrane, serving both as a receptor for the preprotein-SecB complex and as an ATP-driven molecular motor driving the stepwise translocation of polypeptide chains across the membrane. This Wolbachia sp. subsp. Brugia malayi (strain TRS) protein is Protein translocase subunit SecA.